The primary structure comprises 331 residues: Sulfate/thiosulfate import ATP-binding protein CysA (331 aa).

The ABC transporter domain occupies Ile-2–Leu-232. Gly-34–Ser-41 provides a ligand contact to ATP.

Belongs to the ABC transporter superfamily. Sulfate/tungstate importer (TC 3.A.1.6) family. The complex is composed of two ATP-binding proteins (CysA), two transmembrane proteins (CysT and CysW) and a solute-binding protein (CysP).

It localises to the cell membrane. It catalyses the reaction sulfate(out) + ATP + H2O = sulfate(in) + ADP + phosphate + H(+). The enzyme catalyses thiosulfate(out) + ATP + H2O = thiosulfate(in) + ADP + phosphate + H(+). Functionally, part of the ABC transporter complex CysAWTP involved in sulfate/thiosulfate import. Responsible for energy coupling to the transport system. The chain is Sulfate/thiosulfate import ATP-binding protein CysA from Nocardia farcinica (strain IFM 10152).